The sequence spans 175 residues: T-cell surface glycoprotein CD3 epsilon chain (175 aa).

The signal sequence occupies residues 1–21 (MRCEVPLPLLGLLLCVVGAAA). Topologically, residues 22–100 (QGGQEEFAVE…VCANCEELDT (79 aa)) are extracellular. A helical membrane pass occupies residues 101–121 (FTVVGIIAADLLITLGVLILV). Residues 122 to 175 (YYFSKNKKGQSRAAAGSRPRAQKMRRPPPVPNPDYEPIRKGQRDVYAGLEHRGF) are Cytoplasmic-facing. The interval 133 to 163 (RAAAGSRPRAQKMRRPPPVPNPDYEPIRKGQ) is disordered. Residues 146-173 (RRPPPVPNPDYEPIRKGQRDVYAGLEHR) form the ITAM domain.

As to quaternary structure, the TCR/CD3 complex of T-lymphocytes consists of either a TCR alpha/beta or TCR gamma/delta heterodimer coexpressed at the cell surface with the invariant subunits of CD3 labeled gamma, delta, epsilon, zeta, and eta.

The protein localises to the cell membrane. The CD3 complex mediates signal transduction, resulting in T-cell activation and proliferation. Required for normal immune responses. The protein is T-cell surface glycoprotein CD3 epsilon chain (CD3E) of Gallus gallus (Chicken).